The sequence spans 132 residues: Hydrogenase maturation factor HypA (132 aa).

H2 is a Ni(2+) binding site. Zn(2+) contacts are provided by C74, C77, C91, and C94.

This sequence belongs to the HypA/HybF family.

Involved in the maturation of [NiFe] hydrogenases. Required for nickel insertion into the metal center of the hydrogenase. This chain is Hydrogenase maturation factor HypA, found in Synechococcus sp. (strain JA-2-3B'a(2-13)) (Cyanobacteria bacterium Yellowstone B-Prime).